A 534-amino-acid polypeptide reads, in one-letter code: Arginine transporter 1 (534 aa).

The next 6 helical transmembrane spans lie at 35 to 55 (YVLL…YFGW), 99 to 119 (SLFT…GYLL), 126 to 146 (AVAL…AFSG), 154 to 174 (PAFV…LLIV), 182 to 202 (ALIM…PLVL), and 216 to 236 (VCIG…FFFI). Asparagine 246 is a glycosylation site (N-linked (GlcNAc...) asparagine). The tract at residues 261–302 (TAQSSPKAVDSPPCDEGASSRGRLAVSHNTERTAPDDEQEKD) is disordered. The span at 289-302 (NTERTAPDDEQEKD) shows a compositional bias: basic and acidic residues. 6 helical membrane-spanning segments follow: residues 329–349 (AFTF…WVMA), 365–385 (YTLE…GVVI), 388–408 (IGIM…YVCV), 419–439 (FSVI…YVFV), 451–471 (LIGV…VLYG), and 483–503 (RPVV…LLAM).

Belongs to the SLC43A transporter (TC 2.A.1.44) family.

It is found in the cell membrane. The enzyme catalyses L-arginine(in) = L-arginine(out). Its function is as follows. Selective L-arginine transporter that is essential for parasite survival and virulence. Does not require other inorganic ions such as sodium, chloride, potassium or calcium. The sequence is that of Arginine transporter 1 from Toxoplasma gondii (strain ATCC 50611 / Me49).